A 171-amino-acid polypeptide reads, in one-letter code: Endoribonuclease ToxN (171 aa).

Belongs to the ToxN/AbiQ toxin family. As to quaternary structure, one ToxN monomer binds to a 36-nt-long single repeat of the ToxI RNA; this complex forms a triangular heterohexameric complex with ToxN connected by the ToxI RNA to another toxin molecule. The ToxI repeat forms a pseudoknot which occludes the toxin active site. Interaction of ToxI with ToxN partially inhibits the latter's endoribonuclease activity in vitro. The complex self-assembles in vitro with either full-length or processed single repeats; during the process the precursor is processed.

Its function is as follows. Toxic component of a type III toxin-antitoxin (TA) system. An endoribonuclease which is active independently of the ribosome, cleaving between the second and third A of AAA(U/G) sequences, although not all occurrences of this tetranucleotide are cleaved. Digests many mRNA species, including its own transcript and its cognate antitoxin RNA ToxI. ToxI has 5.5 nearly identical 36 nucleotide-long repeats (a single repeat neutralizes the toxin in vivo); a single repeat folds into a pseudoknot which binds the toxin. The ToxI precursor RNA is a preferential target in vivo and is progressively degraded to single repeat lengths as ToxN-ToxI complex self-assembly occurs. In vivo expression of ToxI antitoxin inhibits endonuclease activity of ToxN. The toxin alone inhibits growth when expressed in E.coli without causing cell lysis; this bacteriostatic effect is neutralized by cognate RNA antitoxin ToxI. Non-cognate antitoxin RNA from B.thuringiensis does not inhibit this toxin. The RNA antitoxin is less stable than the proteinaceous toxin; synthesis of ToxI in the absence of new ToxN synthesis restores growth and also detectable accumulation of the ToxN protein. Negatively regulates its own operon in complex with ToxI. The toxin-antitoxin system functions in plasmid maintenance (a plasmid addiction system). Functionally, the TA system protects P.atrosepticum strain 1043 against phage phiM1 and phiA2, E.coli against some but not all coliphages and S.marcescens against some bacteriophages, causing an abortive infection (Abi phenotype). Also protects P.atrosepticum strain 1043 against phage phiTE; phage that escape Abi and grow in this bacterium have evolved a pseudo-ToxI RNA by expanding a pre-existing sequence similar to the bona fide ToxI repeats. This is Endoribonuclease ToxN from Pectobacterium atrosepticum (Erwinia carotovora subsp. atroseptica).